A 734-amino-acid polypeptide reads, in one-letter code: Photosystem I P700 chlorophyll a apoprotein A2 (734 aa).

8 helical membrane-spanning segments follow: residues 46–69, 135–158, 175–199, 273–291, 330–353, 369–395, 417–439, and 517–535; these read IFASHFGQLAIIFLWTSGNLFHVA, LYTGALFLLFISAISLVGGWLHLQ, LNHHLSGLFGVSSLAWAGHLVHVAI, IAHHHLAIAFIFLVAGHMY, IHFQLGLALASLGVITSLVAQHMY, AALYTHHQYIAGFIMTGAFAHGAIFFI, AIISHLSWASLFLGFHTLGLYVH, and FLVHHAIALGLHTTTLILV. 2 residues coordinate [4Fe-4S] cluster: Cys-559 and Cys-568. The next 2 helical transmembrane spans lie at 575–596 and 643–665; these read AFYLAVFWMLNTIGWVTFYWHW and LSVWAWMFLFGHLVWATGFMFLI. Chlorophyll a-binding residues include His-654, Met-662, and Tyr-670. Residue Trp-671 participates in phylloquinone binding. The helical transmembrane segment at 707–727 threads the bilayer; it reads LVGLAHFSVGYIFTYAAFLIA.

This sequence belongs to the PsaA/PsaB family. In terms of assembly, the PsaA/B heterodimer binds the P700 chlorophyll special pair and subsequent electron acceptors. PSI consists of a core antenna complex that captures photons, and an electron transfer chain that converts photonic excitation into a charge separation. The eukaryotic PSI reaction center is composed of at least 11 subunits. P700 is a chlorophyll a/chlorophyll a' dimer, A0 is one or more chlorophyll a, A1 is one or both phylloquinones and FX is a shared 4Fe-4S iron-sulfur center. is required as a cofactor.

It is found in the plastid. Its subcellular location is the chloroplast thylakoid membrane. The catalysed reaction is reduced [plastocyanin] + hnu + oxidized [2Fe-2S]-[ferredoxin] = oxidized [plastocyanin] + reduced [2Fe-2S]-[ferredoxin]. PsaA and PsaB bind P700, the primary electron donor of photosystem I (PSI), as well as the electron acceptors A0, A1 and FX. PSI is a plastocyanin-ferredoxin oxidoreductase, converting photonic excitation into a charge separation, which transfers an electron from the donor P700 chlorophyll pair to the spectroscopically characterized acceptors A0, A1, FX, FA and FB in turn. Oxidized P700 is reduced on the lumenal side of the thylakoid membrane by plastocyanin. In Nymphaea alba (White water-lily), this protein is Photosystem I P700 chlorophyll a apoprotein A2.